We begin with the raw amino-acid sequence, 794 residues long: Hyaluronan mediated motility receptor (794 aa).

The tract at residues 1 to 87 (MSFPKAPLKR…SQKNDKDVKR (87 aa)) is disordered. Position 20 is a phosphoserine (Ser-20). Residues 74–87 (SKKDSQKNDKDVKR) are compositionally biased toward basic and acidic residues. N-linked (GlcNAc...) asparagine glycosylation is found at Asn-134, Asn-279, Asn-446, Asn-467, Asn-488, Asn-509, Asn-530, Asn-561, and Asn-601. A required for interaction with FAM83D region spans residues 365–630 (EEMTSEKNVF…ITDLKNQLRQ (266 aa)). 5 consecutive repeat copies span residues 442–462 (QEKY…LESV), 463–483 (QEKY…LESE), 484–504 (QEKY…LESE), 505–525 (QEKY…LESV), and 526–546 (QEKY…LESY). The 5 X 21 AA tandem repeats stretch occupies residues 442 to 546 (QEKYNDTAQS…RDVTAQLESY (105 aa)). Hyaluronic acid-binding stretches follow at residues 719 to 729 (KQKIKHVVKLK) and 741 to 750 (KLRSQLVKRK). Thr-784 is subject to Phosphothreonine.

In terms of assembly, interacts with ANKRD26. Interacts with DYNLL1. Interacts with FAM83D/CHICA. As to expression, ubiquitously expressed.

Its subcellular location is the cell surface. The protein resides in the cytoplasm. It localises to the cytoskeleton. It is found in the spindle. Functionally, receptor for hyaluronic acid (HA). Involved in cell motility. When hyaluronan binds to HMMR, the phosphorylation of a number of proteins, including the PTK2/FAK1 occurs. May also be involved in cellular transformation and metastasis formation, and in regulating extracellular-regulated kinase (ERK) activity. May act as a regulator of adipogenesis. This is Hyaluronan mediated motility receptor (Hmmr) from Mus musculus (Mouse).